Reading from the N-terminus, the 351-residue chain is Probable minor fimbrial subunit LpfD (351 aa).

An N-terminal signal peptide occupies residues 1–22 (MKAAIALSLLGCVFGFSGKAFA).

This sequence belongs to the fimbrial protein family.

The protein resides in the fimbrium. Part of the lpfABCC'DE fimbrial operon. LP fimbriae may participate in the interaction with eukaryotic cells by assisting in microcolony formation. This chain is Probable minor fimbrial subunit LpfD (lpfD), found in Escherichia coli O157:H7.